The sequence spans 221 residues: Probable transaldolase (221 aa).

The active-site Schiff-base intermediate with substrate is K87.

Belongs to the transaldolase family. Type 3B subfamily.

Its subcellular location is the cytoplasm. It catalyses the reaction D-sedoheptulose 7-phosphate + D-glyceraldehyde 3-phosphate = D-erythrose 4-phosphate + beta-D-fructose 6-phosphate. Its pathway is carbohydrate degradation; pentose phosphate pathway; D-glyceraldehyde 3-phosphate and beta-D-fructose 6-phosphate from D-ribose 5-phosphate and D-xylulose 5-phosphate (non-oxidative stage): step 2/3. In terms of biological role, transaldolase is important for the balance of metabolites in the pentose-phosphate pathway. This is Probable transaldolase from Syntrophobacter fumaroxidans (strain DSM 10017 / MPOB).